Reading from the N-terminus, the 434-residue chain is Protein POLLENLESS 3 (434 aa).

Residues 13–47 (VYYTPPPARTSDHVAAMPMTERRRPPYSCSSSSER) form a disordered region. Positions 34-37 (RRRP) match the Nuclear localization signal 1 motif. 4 TPR repeats span residues 95 to 131 (DSAL…ESQD), 133 to 164 (IDNL…LEQG), 191 to 224 (ARIL…ERDK), and 241 to 274 (PEAK…AVEM). Residues 142–166 (KKSGRIEEEAVLLEHKLQTLEQGMG) adopt a coiled-coil conformation. A disordered region spans residues 309-329 (TANKNYSDVSSSPASVRPNSA). Polar residues predominate over residues 310 to 326 (ANKNYSDVSSSPASVRP). Positions 377–380 (KRKK) match the Nuclear localization signal 2 motif. Positions 393–408 (VKDTADGPKSESKKSW) are enriched in basic and acidic residues. A disordered region spans residues 393-434 (VKDTADGPKSESKKSWADIAEEEEAEEEEEERLQGELKTAEM). Residues 408-434 (WADIAEEEEAEEEEEERLQGELKTAEM) adopt a coiled-coil conformation. Residues 411–423 (IAEEEEAEEEEEE) show a composition bias toward acidic residues. The span at 424–434 (RLQGELKTAEM) shows a compositional bias: basic and acidic residues.

It belongs to the MS5 protein family. In terms of tissue distribution, expressed at low levels mostly in floral organs during meiosis. Also barely detectable in leaves, stems and roots.

Its subcellular location is the nucleus. In terms of biological role, essential for male fertility, especially for microspore and pollen grain production. Involved in the regulation of cell division after male meiosis I and II to facilitate exit from meiosis and transition to G1. The protein is Protein POLLENLESS 3 of Arabidopsis thaliana (Mouse-ear cress).